Consider the following 161-residue polypeptide: Deoxyuridine 5'-triphosphate nucleotidohydrolase (161 aa).

Residues 80–82 (RSG), asparagine 93, 97–99 (TVD), and lysine 107 each bind substrate.

Belongs to the dUTPase family. Mg(2+) serves as cofactor.

It carries out the reaction dUTP + H2O = dUMP + diphosphate + H(+). Its pathway is pyrimidine metabolism; dUMP biosynthesis; dUMP from dCTP (dUTP route): step 2/2. This enzyme is involved in nucleotide metabolism: it produces dUMP, the immediate precursor of thymidine nucleotides and it decreases the intracellular concentration of dUTP so that uracil cannot be incorporated into DNA. The polypeptide is Deoxyuridine 5'-triphosphate nucleotidohydrolase (Mesorhizobium japonicum (strain LMG 29417 / CECT 9101 / MAFF 303099) (Mesorhizobium loti (strain MAFF 303099))).